Reading from the N-terminus, the 277-residue chain is Bifunctional protein FolD (277 aa).

NADP(+) is bound by residues 160–162 (GAS), serine 185, and isoleucine 226.

It belongs to the tetrahydrofolate dehydrogenase/cyclohydrolase family. In terms of assembly, homodimer.

It catalyses the reaction (6R)-5,10-methylene-5,6,7,8-tetrahydrofolate + NADP(+) = (6R)-5,10-methenyltetrahydrofolate + NADPH. The enzyme catalyses (6R)-5,10-methenyltetrahydrofolate + H2O = (6R)-10-formyltetrahydrofolate + H(+). It functions in the pathway one-carbon metabolism; tetrahydrofolate interconversion. Its function is as follows. Catalyzes the oxidation of 5,10-methylenetetrahydrofolate to 5,10-methenyltetrahydrofolate and then the hydrolysis of 5,10-methenyltetrahydrofolate to 10-formyltetrahydrofolate. The chain is Bifunctional protein FolD from Ruthia magnifica subsp. Calyptogena magnifica.